An 853-amino-acid chain; its full sequence is DNA mismatch repair protein MutS (853 aa).

614 to 621 lines the ATP pocket; that stretch reads GPNMGGKS.

This sequence belongs to the DNA mismatch repair MutS family.

In terms of biological role, this protein is involved in the repair of mismatches in DNA. It is possible that it carries out the mismatch recognition step. This protein has a weak ATPase activity. The chain is DNA mismatch repair protein MutS from Escherichia fergusonii (strain ATCC 35469 / DSM 13698 / CCUG 18766 / IAM 14443 / JCM 21226 / LMG 7866 / NBRC 102419 / NCTC 12128 / CDC 0568-73).